The primary structure comprises 182 residues: MNKQPEEWQDPQSLQQQDDEQDEIIWVSKSEIKRDAETLKQLGVELVSLGKNALEKIPLDDDLRCAIALAQRIKREGQRRQIQLIGKMLRARDPEPIQQALDKLKNRHNQQITLFHKLEILRDKLLAQGDDAIAQVLEHYPQADRQQLRALVRNAQKEKAAKKPPKTARQLYQYLHTLSEAD.

The disordered stretch occupies residues 1-20 (MNKQPEEWQDPQSLQQQDDE).

The protein belongs to the DarP family.

The protein localises to the cytoplasm. Member of a network of 50S ribosomal subunit biogenesis factors which assembles along the 30S-50S interface, preventing incorrect 23S rRNA structures from forming. Promotes peptidyl transferase center (PTC) maturation. This is Dual-action ribosomal maturation protein DarP from Sodalis glossinidius (strain morsitans).